The primary structure comprises 308 residues: tRNA dimethylallyltransferase (308 aa).

Residue 19-26 (GPTASGKS) participates in ATP binding. 21 to 26 (TASGKS) is a substrate binding site. The interaction with substrate tRNA stretch occupies residues 44–47 (DSMQ).

It belongs to the IPP transferase family. In terms of assembly, monomer. Requires Mg(2+) as cofactor.

The enzyme catalyses adenosine(37) in tRNA + dimethylallyl diphosphate = N(6)-dimethylallyladenosine(37) in tRNA + diphosphate. Catalyzes the transfer of a dimethylallyl group onto the adenine at position 37 in tRNAs that read codons beginning with uridine, leading to the formation of N6-(dimethylallyl)adenosine (i(6)A). The polypeptide is tRNA dimethylallyltransferase (Methylobacterium radiotolerans (strain ATCC 27329 / DSM 1819 / JCM 2831 / NBRC 15690 / NCIMB 10815 / 0-1)).